Consider the following 475-residue polypeptide: tRNA-dihydrouridine(16/17) synthase [NAD(P)(+)]-like (475 aa).

Residues 23–25 and Gln-79 contribute to the FMN site; that span reads PMV. Cys-108 functions as the Proton donor in the catalytic mechanism. Residues Lys-147, His-175, 208–210, and 232–233 contribute to the FMN site; these read NGN and AE. The interval 343-388 is disordered; sequence GPREGSKENSGGRSKRALEEEEGSMEGLSKNKLKKQLRNPHKTFDP. Over residues 373–383 the composition is skewed to basic residues; that stretch reads NKLKKQLRNPH.

Belongs to the Dus family. Dus1 subfamily. Requires FMN as cofactor.

The protein resides in the cytoplasm. The protein localises to the nucleus. The enzyme catalyses 5,6-dihydrouridine(16) in tRNA + NADP(+) = uridine(16) in tRNA + NADPH + H(+). It carries out the reaction 5,6-dihydrouridine(16) in tRNA + NAD(+) = uridine(16) in tRNA + NADH + H(+). The catalysed reaction is 5,6-dihydrouridine(17) in tRNA + NAD(+) = uridine(17) in tRNA + NADH + H(+). It catalyses the reaction 5,6-dihydrouridine(17) in tRNA + NADP(+) = uridine(17) in tRNA + NADPH + H(+). In terms of biological role, catalyzes the synthesis of dihydrouridine, a modified base found in the D-loop of most tRNAs. Specifically modifies U16 and U17 in cytoplasmic tRNAs. Affects the level of some mature tRNA and thereby the total cellular translation. This Mus musculus (Mouse) protein is tRNA-dihydrouridine(16/17) synthase [NAD(P)(+)]-like (Dus1l).